The sequence spans 168 residues: Pleiotrophin (168 aa).

The N-terminal stretch at 1–32 (MQTPQYLQQRRKFAAAFLAFIFILAAVDTAEA) is a signal peptide. Disulfide bonds link C47–C76, C55–C85, C62–C89, C99–C131, and C109–C141. 2 chondroitin sulfate binding regions span residues 92–99 (KKQFGAEC) and 123–131 (KRALHNADC). The segment at 141–168 (CGKLTKSKPQAESKKKKKEGKKQEKMLD) is disordered. The tract at residues 147–168 (SKPQAESKKKKKEGKKQEKMLD) is chondroitin sulfate A binding.

As to quaternary structure, interacts with ALK and NEK6. Interacts with PTPRZ1 (via chondroitin sulfate groups); promotes formation of homooligomers; oligomerization impairs tyrosine phosphatase activity. Forms a complex with PTPRZ1 and CTNNB1; this complex inactivates PTPRZ1 protein tyrosine phosphatase activity through PTN interaction and stimulates tyrosine phosphorylation of CTNNB1. Interacts with ITGB3 and ITGA5. Forms a complex with PTPRZ1 and integrin alpha-V/beta-3 (ITGAV:ITGB3) that stimulates endothelial cell migration through ITGB3 'Tyr-773' phosphorylation. Interacts with SDC3 (via heparan sulfate chains); this interaction mediates the neurite outgrowth-promoting signal from PTN to the cytoskeleton of growing neurites; this interaction mediates osteoblast recruitment. Interacts with GPC2 (via heparan sulfate); this interaction promotes neurite outgrowth through binding of PTN with chondroitin sulfate of proteoglycans, thereby releasing PTPRS of chondroitin sulfate proteoglycans (CSPGs) and leading to binding with heparan sulfate of GPC2. In terms of processing, phosphorylated by NEK6.

The protein resides in the secreted. In terms of biological role, secreted growth factor that mediates its signal through cell-surface proteoglycan and non-proteoglycan receptors. Binds cell-surface proteoglycan receptor via their chondroitin sulfate (CS) groups. Thereby regulates many processes like cell proliferation, cell survival, cell growth, cell differentiation and cell migration in several tissues namely neuron and bone. Also plays a role in synaptic plasticity and learning-related behavior by inhibiting long-term synaptic potentiation. Binds PTPRZ1, leading to neutralization of the negative charges of the CS chains of PTPRZ1, inducing PTPRZ1 clustering, thereby causing the dimerization and inactivation of its phosphatase activity leading to increased tyrosine phosphorylation of each of the PTPRZ1 substrates like ALK, CTNNB1 or AFAP1L2 in order to activate the PI3K-AKT pathway. Through PTPRZ1 binding controls oligodendrocyte precursor cell differentiation by enhancing the phosphorylation of AFAP1L2 in order to activate the PI3K-AKT pathway. Forms a complex with PTPRZ1 and integrin alpha-V/beta-3 (ITGAV:ITGB3) that stimulates endothelial cell migration through SRC dephosphorylation and activation that consequently leads to ITGB3 'Tyr-773' phosphorylation. In adult hippocampus promotes dendritic arborization, spine development, and functional integration and connectivity of newborn granule neurons through ALK by activating AKT signaling pathway. Binds GPC2 and chondroitin sulfate proteoglycans (CSPGs) at the neuron surface, leading to abrogation of binding between PTPRS and CSPGs and neurite outgrowth promotion. Binds SDC3 and mediates bone formation by recruiting and attaching osteoblasts/osteoblast precursors to the sites for new bone deposition. Binds ALK and promotes cell survival and cell proliferation through MAPK pathway activation. Inhibits proliferation and enhances differentiation of neural stem cells by inhibiting FGF2-induced fibroblast growth factor receptor signaling pathway. Mediates regulatory mechanisms in normal hemostasis and in hematopoietic regeneration and in maintaining the balance of myeloid and lymphoid regeneration. In addition may play a role in the female reproductive system, auditory response and the progesterone-induced decidualization pathway. The chain is Pleiotrophin from Bos taurus (Bovine).